The sequence spans 361 residues: UDP-N-acetylglucosamine--N-acetylmuramyl-(pentapeptide) pyrophosphoryl-undecaprenol N-acetylglucosamine transferase (361 aa).

UDP-N-acetyl-alpha-D-glucosamine is bound by residues 12–14 (TGG), Asn-126, Arg-167, Ser-192, Ile-247, and Gln-292.

The protein belongs to the glycosyltransferase 28 family. MurG subfamily.

It is found in the cell inner membrane. It carries out the reaction di-trans,octa-cis-undecaprenyl diphospho-N-acetyl-alpha-D-muramoyl-L-alanyl-D-glutamyl-meso-2,6-diaminopimeloyl-D-alanyl-D-alanine + UDP-N-acetyl-alpha-D-glucosamine = di-trans,octa-cis-undecaprenyl diphospho-[N-acetyl-alpha-D-glucosaminyl-(1-&gt;4)]-N-acetyl-alpha-D-muramoyl-L-alanyl-D-glutamyl-meso-2,6-diaminopimeloyl-D-alanyl-D-alanine + UDP + H(+). It functions in the pathway cell wall biogenesis; peptidoglycan biosynthesis. Cell wall formation. Catalyzes the transfer of a GlcNAc subunit on undecaprenyl-pyrophosphoryl-MurNAc-pentapeptide (lipid intermediate I) to form undecaprenyl-pyrophosphoryl-MurNAc-(pentapeptide)GlcNAc (lipid intermediate II). This chain is UDP-N-acetylglucosamine--N-acetylmuramyl-(pentapeptide) pyrophosphoryl-undecaprenol N-acetylglucosamine transferase, found in Syntrophus aciditrophicus (strain SB).